Here is a 338-residue protein sequence, read N- to C-terminus: MADQAPFDTDVNTLTRFVMEEGRKARGTGELTQLLNSLCTAVKAISSAVRKAGIAHLYGIAGSTNVTGDQVKKLDVLSNDLVMNMLKSSFATCVLVSEEDKHAIIVEPEKRGKYVVCFDPLDGSSNIDCLVSVGTIFGIYRKKSTDEPSEKDALQPGRNLVAAGYALYGSATMLVLAMDCGVNCFMLDPAIGEFILVDKDVKIKKKGKIYSLNEGYARDFDPAVTEYIQRKKFPPDNSAPYGARYVGSMVADVHRTLVYGGIFLYPANKKSPNGKLRLLYECNPMAYVMEKAGGMATTGKEAVLDVIPTDIHQRAPVILGSPDDVLEFLKVYEKHSAQ.

Residue Ala2 is modified to N-acetylalanine. Residues Val18–Gly22 and Thr28–Thr32 each bind AMP. Mg(2+) is bound by residues Asp69 and Glu98. Residue Lys113–Tyr114 participates in AMP binding. The Mg(2+) site is built by Asp119, Leu121, and Asp122. Asp122–Ser125 contacts substrate. Arg141 is an AMP binding site. Lys151 is subject to N6-succinyllysine. Residues Asn213 to Tyr216, Arg244 to Met249, Tyr265, and Lys275 to Arg277 each bind substrate. Tyr216, Tyr245, and Tyr265 each carry phosphotyrosine. Glu281 is a Mg(2+) binding site.

This sequence belongs to the FBPase class 1 family. As to quaternary structure, homotetramer. Mg(2+) is required as a cofactor. As to expression, expressed in pancreatic islets.

It catalyses the reaction beta-D-fructose 1,6-bisphosphate + H2O = beta-D-fructose 6-phosphate + phosphate. The protein operates within carbohydrate biosynthesis; gluconeogenesis. With respect to regulation, subject to complex allosteric regulation. The enzyme can assume an active R-state, or an inactive T-state. Intermediate conformations may exist. AMP acts as an allosteric inhibitor. AMP binding affects the turnover of bound substrate and not the affinity for substrate. Fructose 2,6-bisphosphate acts as a competitive inhibitor. Fructose 2,6-bisphosphate and AMP have synergistic effects. Its function is as follows. Catalyzes the hydrolysis of fructose 1,6-bisphosphate to fructose 6-phosphate in the presence of divalent cations, acting as a rate-limiting enzyme in gluconeogenesis. Plays a role in regulating glucose sensing and insulin secretion of pancreatic beta-cells. Appears to modulate glycerol gluconeogenesis in liver. Important regulator of appetite and adiposity; increased expression of the protein in liver after nutrient excess increases circulating satiety hormones and reduces appetite-stimulating neuropeptides and thus seems to provide a feedback mechanism to limit weight gain. The sequence is that of Fructose-1,6-bisphosphatase 1 (FBP1) from Homo sapiens (Human).